A 358-amino-acid chain; its full sequence is Uroporphyrinogen decarboxylase (358 aa).

Substrate-binding positions include 27–31 (RQAGR), Asp-77, Tyr-154, Ser-209, and His-327.

It belongs to the uroporphyrinogen decarboxylase family. Homodimer.

It localises to the cytoplasm. It carries out the reaction uroporphyrinogen III + 4 H(+) = coproporphyrinogen III + 4 CO2. It participates in porphyrin-containing compound metabolism; protoporphyrin-IX biosynthesis; coproporphyrinogen-III from 5-aminolevulinate: step 4/4. Functionally, catalyzes the decarboxylation of four acetate groups of uroporphyrinogen-III to yield coproporphyrinogen-III. In Azoarcus sp. (strain BH72), this protein is Uroporphyrinogen decarboxylase.